A 395-amino-acid polypeptide reads, in one-letter code: Chalcone synthase 7 (395 aa).

Cys-169 is an active-site residue.

Belongs to the thiolase-like superfamily. Chalcone/stilbene synthases family.

It carries out the reaction (E)-4-coumaroyl-CoA + 3 malonyl-CoA + 3 H(+) = 2',4,4',6'-tetrahydroxychalcone + 3 CO2 + 4 CoA. Its pathway is secondary metabolite biosynthesis; flavonoid biosynthesis. Functionally, the primary product of this enzyme is 4,2',4',6'-tetrahydroxychalcone (also termed naringenin-chalcone or chalcone) which can under specific conditions spontaneously isomerize into naringenin. This Picea mariana (Black spruce) protein is Chalcone synthase 7 (CSF7).